We begin with the raw amino-acid sequence, 258 residues long: Ribosomal RNA small subunit methyltransferase J (258 aa).

S-adenosyl-L-methionine is bound by residues 111–112, 127–128, and D179; these read RD and ER.

The protein belongs to the methyltransferase superfamily. RsmJ family.

The protein resides in the cytoplasm. It catalyses the reaction guanosine(1516) in 16S rRNA + S-adenosyl-L-methionine = N(2)-methylguanosine(1516) in 16S rRNA + S-adenosyl-L-homocysteine + H(+). Specifically methylates the guanosine in position 1516 of 16S rRNA. The chain is Ribosomal RNA small subunit methyltransferase J from Alteromonas mediterranea (strain DSM 17117 / CIP 110805 / LMG 28347 / Deep ecotype).